The primary structure comprises 230 residues: Orotidine 5'-phosphate decarboxylase (230 aa).

Substrate contacts are provided by residues Asp-10, Lys-31, 58–67 (DLKLHDIPNT), Thr-117, Arg-179, Gln-188, Gly-208, and Arg-209. Catalysis depends on Lys-60, which acts as the Proton donor.

It belongs to the OMP decarboxylase family. Type 1 subfamily. In terms of assembly, homodimer.

It carries out the reaction orotidine 5'-phosphate + H(+) = UMP + CO2. The protein operates within pyrimidine metabolism; UMP biosynthesis via de novo pathway; UMP from orotate: step 2/2. In terms of biological role, catalyzes the decarboxylation of orotidine 5'-monophosphate (OMP) to uridine 5'-monophosphate (UMP). In Staphylococcus aureus (strain bovine RF122 / ET3-1), this protein is Orotidine 5'-phosphate decarboxylase.